A 132-amino-acid chain; its full sequence is Small ribosomal subunit protein uS8 (132 aa).

It belongs to the universal ribosomal protein uS8 family. As to quaternary structure, part of the 30S ribosomal subunit. Contacts proteins S5 and S12.

One of the primary rRNA binding proteins, it binds directly to 16S rRNA central domain where it helps coordinate assembly of the platform of the 30S subunit. The chain is Small ribosomal subunit protein uS8 from Alkaliphilus metalliredigens (strain QYMF).